A 184-amino-acid chain; its full sequence is Large ribosomal subunit protein uL5c (184 aa).

The protein belongs to the universal ribosomal protein uL5 family. Part of the 50S ribosomal subunit; contacts the 5S rRNA.

It is found in the plastid. It localises to the chloroplast. Binds 5S rRNA, forms part of the central protuberance of the 50S subunit. This Zygnema circumcarinatum (Green alga) protein is Large ribosomal subunit protein uL5c (rpl5).